A 983-amino-acid chain; its full sequence is Anion exchange protein 4 (983 aa).

The segment at 1–48 (MEMKLPGQEGFEASSAPRNIPSGELDSNPDPGTGPSPDGPSDTESKEL) is disordered. Asn183 is a glycosylation site (N-linked (GlcNAc...) asparagine). Disordered stretches follow at residues 186–205 (TGTRPCWGSTHPRKASDNEE) and 332–357 (RIPPPKCLPSQHKRLPSQQREIRGPA). The next 4 membrane-spanning stretches (helical) occupy residues 415-435 (AVLYIYLATVTNAITFGGLLG), 443-463 (GVLESFLGTAVAGAAFCLMAG), 500-520 (VGIWVATFCLVLVATEASVLV), and 530-550 (GFCALISLIFIYDAVGKMLNL). Residues 415–983 (AVLYIYLATV…KAPEINISVN (569 aa)) are membrane (anion exchange). Residues Asn576 and Asn600 are each glycosylated (N-linked (GlcNAc...) asparagine). The next 7 membrane-spanning stretches (helical) occupy residues 624 to 644 (VPDIAFFSLLLFLTSFFFAMA), 665 to 685 (FSSVLAILLGCGLDAFLGLAT), 712 to 732 (PWWWSVAAALPALLLSILIFM), 758 to 778 (LFCVAVLMLLTSALGLPWYVS), 815 to 835 (GLVVFILTGASIFLAPVLKFI), 837 to 857 (MPVLYGIFLYMGVAALSSIQF), and 899 to 919 (LWIIKSTPAAIIFPLMLLGLV). Over residues 946–957 (RSIPEKGLEPEH) the composition is skewed to basic and acidic residues. A disordered region spans residues 946 to 983 (RSIPEKGLEPEHSFSGSDSEDSELMYQPKAPEINISVN). N-linked (GlcNAc...) asparagine glycosylation is present at Asn979.

Belongs to the anion exchanger (TC 2.A.31) family. Kidney specific.

The protein resides in the basolateral cell membrane. The catalysed reaction is 2 hydrogencarbonate(out) + chloride(in) + Na(+)(out) = 2 hydrogencarbonate(in) + chloride(out) + Na(+)(in). It carries out the reaction K(+)(in) + 2 hydrogencarbonate(in) + chloride(out) = K(+)(out) + 2 hydrogencarbonate(out) + chloride(in). It catalyses the reaction Li(+)(in) + 2 hydrogencarbonate(in) + chloride(out) = Li(+)(out) + 2 hydrogencarbonate(out) + chloride(in). The enzyme catalyses Rb(+)(in) + 2 hydrogencarbonate(in) + chloride(out) = Rb(+)(out) + 2 hydrogencarbonate(out) + chloride(in). The catalysed reaction is Cs(+)(in) + 2 hydrogencarbonate(in) + chloride(out) = Cs(+)(out) + 2 hydrogencarbonate(out) + chloride(in). Functionally, electroneutral Cl(-)/HCO3(-) antiporter that favors chloride ion entry and efflux of hydrogencarbonate and sodium ion across the basolateral membrane and may participate in salivary secretion. Also mediates Cl(-)/HCO3(-) exchange activity in the presence of K(+) as well as Cs(+), Li(+), and Rb(+). Does not contribute to Cl(-)/HCO3(-) exchanger in the apical membrane of the upper villous epithelium. The sequence is that of Anion exchange protein 4 from Homo sapiens (Human).